A 195-amino-acid polypeptide reads, in one-letter code: MSGLVPIVVEQTNRGERAYDIYSRLLKDRIIFIGGPIDDHIANLVIAQFLFLEAEDPEKDIHLYINSPGGVVTAGLAIYDTMQYIKPAVSTICLGQAASMGSFLLAAGAPGKRYALPMARIMIHQPLGGVQGQATDIDIHAKEILRMKDLLNDRLAHHTGQPLEQITRDTERDYFMSAEEAKKYGLIDEVMPYRK.

The Nucleophile role is filled by serine 99. Residue histidine 124 is part of the active site.

This sequence belongs to the peptidase S14 family. In terms of assembly, fourteen ClpP subunits assemble into 2 heptameric rings which stack back to back to give a disk-like structure with a central cavity, resembling the structure of eukaryotic proteasomes.

It localises to the cytoplasm. It carries out the reaction Hydrolysis of proteins to small peptides in the presence of ATP and magnesium. alpha-casein is the usual test substrate. In the absence of ATP, only oligopeptides shorter than five residues are hydrolyzed (such as succinyl-Leu-Tyr-|-NHMec, and Leu-Tyr-Leu-|-Tyr-Trp, in which cleavage of the -Tyr-|-Leu- and -Tyr-|-Trp bonds also occurs).. In terms of biological role, cleaves peptides in various proteins in a process that requires ATP hydrolysis. Has a chymotrypsin-like activity. Plays a major role in the degradation of misfolded proteins. This is ATP-dependent Clp protease proteolytic subunit from Desulforamulus reducens (strain ATCC BAA-1160 / DSM 100696 / MI-1) (Desulfotomaculum reducens).